Consider the following 531-residue polypeptide: Efflux pump terG (531 aa).

Residues 1–11 (MSSSTLEGQET) show a composition bias toward polar residues. Positions 1 to 27 (MSSSTLEGQETASHHSKNSPSRHGDDG) are disordered. The next 13 helical transmembrane spans lie at 86–106 (GKLS…ILIG), 117–137 (AIFV…GVSV), 145–165 (ILAR…ALAI), 179–199 (FAWF…FGPL), 207–227 (WIYW…IVAI), 249–269 (IDLL…FAWN), 280–300 (YVYV…YVEL), 319–339 (FVFG…FYVI), 351–371 (IQMA…ALIV), 380–400 (ASSI…LMAL), 402–422 (PVHS…TFAM), 447–467 (SVIM…AGTI), and 488–508 (TLWF…IFLL).

The protein belongs to the major facilitator superfamily.

The protein localises to the cell membrane. Efflux pump that might be required for efficient secretion of terrein or other secondary metabolies produced by the terrein genne cluster. The protein is Efflux pump terG of Aspergillus terreus (strain NIH 2624 / FGSC A1156).